Consider the following 444-residue polypeptide: Argininosuccinate synthase (444 aa).

ATP is bound by residues 18 to 26 (AFSGGLDTS) and alanine 44. Tyrosine 100 serves as a coordination point for L-citrulline. 2 residues coordinate ATP: glycine 130 and threonine 132. 3 residues coordinate L-aspartate: threonine 132, asparagine 136, and aspartate 137. Asparagine 136 contributes to the L-citrulline binding site. Aspartate 137 provides a ligand contact to ATP. L-citrulline-binding residues include arginine 140 and serine 193. ATP is bound at residue aspartate 195. L-citrulline is bound by residues threonine 202, glutamate 204, and glutamate 281.

Belongs to the argininosuccinate synthase family. Type 2 subfamily. In terms of assembly, homotetramer.

It is found in the cytoplasm. The enzyme catalyses L-citrulline + L-aspartate + ATP = 2-(N(omega)-L-arginino)succinate + AMP + diphosphate + H(+). It participates in amino-acid biosynthesis; L-arginine biosynthesis; L-arginine from L-ornithine and carbamoyl phosphate: step 2/3. The protein is Argininosuccinate synthase of Haemophilus influenzae (strain PittGG).